The primary structure comprises 582 residues: Spermatogenesis-associated protein 7 homolog (582 aa).

2 disordered regions span residues 167–192 (LMSGTQKHASTSPSRHSGCGHGCDRR) and 251–289 (RKDFSDQRMEAETQTELSSFNSELGTAEKTSSKDSEVNI). Polar residues-rich tracts occupy residues 169–181 (SGTQKHASTSPSR) and 262–274 (ETQTELSSFNSEL).

As to quaternary structure, found in a complex with CFAP410, NEK1 and SPATA7. Interacts with NEK1. Interacts with RPGRIP1. Interacts with RPGR. Interacts with NPHP4. Interacts with NPHP1. Interacts with AHI1. As to expression, expressed in the retina (at protein level). Expressed in the choroid region and retinal pigment endothelium, within the photoreceptor layer (at protein level).

The protein resides in the cytoplasm. Its subcellular location is the cytoskeleton. The protein localises to the cilium axoneme. It is found in the cilium basal body. It localises to the cell projection. The protein resides in the cilium. Its subcellular location is the photoreceptor outer segment. In terms of biological role, involved in the maintenance of both rod and cone photoreceptor cells. Required for photoreceptor-specific localization of proximal connecting cilium (CC) proteins RPGR, AHI1, NPHP1, NPHP4, and RPGRIP1 at the distal CC, a photoreceptor-specific extension of the primary cilium transition zone. Maintenance of protein localization at the photoreceptor-specific distal CC is essential for normal microtubule stability and to prevent photoreceptor degeneration. The protein is Spermatogenesis-associated protein 7 homolog (Spata7) of Mus musculus (Mouse).